The primary structure comprises 1006 residues: Unconventional myosin-Id (1006 aa).

At Ala2 the chain carries N-acetylalanine. The region spanning 9–695 (FGKADFVLMD…TLFTLEELRA (687 aa)) is the Myosin motor domain. Position 102–109 (102–109 (GESGAGKT)) interacts with ATP. Ser200 carries the post-translational modification Phosphoserine. Tyr536 carries the phosphotyrosine modification. Residues 572–594 (MIALVDNLASKEPYYVRCIKPND) are actin-binding. IQ domains follow at residues 699–719 (IRIVLFLQKVWRGTLARMRYK) and 721–741 (TKAALTIIRYYRHYKVKSYIQ). The TH1 domain occupies 812–1005 (GQRADLGLQR…RSGFILSVPG (194 aa)).

The protein belongs to the TRAFAC class myosin-kinesin ATPase superfamily. Myosin family. In terms of assembly, interacts (via the two IQ motifs) with calmodulin. Binds an additional calmodulin chain via a third, C-terminal region. Interacts with F-actin.

The protein localises to the cytoplasm. The protein resides in the perikaryon. It is found in the cell projection. Its subcellular location is the dendrite. It localises to the early endosome. The protein localises to the cell cortex. Its function is as follows. Unconventional myosin that functions as actin-based motor protein with ATPase activity. Plays a role in endosomal protein trafficking, and especially in the transfer of cargo proteins from early to recycling endosomes. Required for normal planar cell polarity in ciliated tracheal cells, for normal rotational polarity of cilia, and for coordinated, unidirectional ciliary movement in the trachea. Required for normal, polarized cilia organization in brain ependymal epithelial cells. This Canis lupus familiaris (Dog) protein is Unconventional myosin-Id (MYO1D).